Reading from the N-terminus, the 101-residue chain is uncharacterized protein (101 aa).

This is an uncharacterized protein from Homo sapiens (Human).